A 247-amino-acid chain; its full sequence is Agamous-like MADS-box protein FUL-L (247 aa).

Residues 1-61 enclose the MADS-box domain; that stretch reads MGRGRVQLKR…GKLFEYSSDS (61 aa). The 91-residue stretch at 88-178 folds into the K-box domain; it reads QGNWSMDYPK…AKKVKEKEKV (91 aa). The interval 224–247 is disordered; that stretch reads EDGAEARPSPNTLMPPWMLRHVNE.

Expressed in tendrils and flowers.

It localises to the nucleus. Probable transcription factor involved in flower development. The polypeptide is Agamous-like MADS-box protein FUL-L (Vitis vinifera (Grape)).